We begin with the raw amino-acid sequence, 56 residues long: Small ribosomal subunit protein uS14 (56 aa).

It belongs to the universal ribosomal protein uS14 family. In terms of assembly, component of the small ribosomal subunit (SSU). Mature yeast ribosomes consist of a small (40S) and a large (60S) subunit. The 40S small subunit contains 1 molecule of ribosomal RNA (18S rRNA) and at least 33 different proteins. The large 60S subunit contains 3 rRNA molecules (25S, 5.8S and 5S rRNA) and at least 46 different proteins.

The protein resides in the cytoplasm. The protein localises to the nucleus. Component of the ribosome, a large ribonucleoprotein complex responsible for the synthesis of proteins in the cell. The small ribosomal subunit (SSU) binds messenger RNAs (mRNAs) and translates the encoded message by selecting cognate aminoacyl-transfer RNA (tRNA) molecules. The large subunit (LSU) contains the ribosomal catalytic site termed the peptidyl transferase center (PTC), which catalyzes the formation of peptide bonds, thereby polymerizing the amino acids delivered by tRNAs into a polypeptide chain. The nascent polypeptides leave the ribosome through a tunnel in the LSU and interact with protein factors that function in enzymatic processing, targeting, and the membrane insertion of nascent chains at the exit of the ribosomal tunnel. This chain is Small ribosomal subunit protein uS14 (rps29), found in Schizosaccharomyces pombe (strain 972 / ATCC 24843) (Fission yeast).